A 308-amino-acid chain; its full sequence is uncharacterized protein (308 aa).

Residues 1 to 18 form the signal peptide; that stretch reads MKIILLFLAALASFTVHA.

This is an uncharacterized protein from Escherichia coli (strain K12).